Here is a 242-residue protein sequence, read N- to C-terminus: DNA repair protein RecO (242 aa).

It belongs to the RecO family. In terms of assembly, monomer.

In terms of biological role, involved in DNA repair and RecF pathway recombination. This chain is DNA repair protein RecO, found in Salmonella dublin (strain CT_02021853).